Consider the following 209-residue polypeptide: Outer-membrane lipoprotein carrier protein (209 aa).

The first 21 residues, 1–21, serve as a signal peptide directing secretion; the sequence is MHRQLRYAVLATALFASTAFA.

It belongs to the LolA family. Monomer.

The protein resides in the periplasm. Its function is as follows. Participates in the translocation of lipoproteins from the inner membrane to the outer membrane. Only forms a complex with a lipoprotein if the residue after the N-terminal Cys is not an aspartate (The Asp acts as a targeting signal to indicate that the lipoprotein should stay in the inner membrane). This chain is Outer-membrane lipoprotein carrier protein, found in Xanthomonas oryzae pv. oryzae (strain MAFF 311018).